Consider the following 309-residue polypeptide: tRNA dimethylallyltransferase (309 aa).

ATP is bound at residue Gly14–Ser21. Thr16–Ser21 provides a ligand contact to substrate. The interval Asp39–Gln42 is interaction with substrate tRNA.

It belongs to the IPP transferase family. In terms of assembly, monomer. Requires Mg(2+) as cofactor.

The enzyme catalyses adenosine(37) in tRNA + dimethylallyl diphosphate = N(6)-dimethylallyladenosine(37) in tRNA + diphosphate. Catalyzes the transfer of a dimethylallyl group onto the adenine at position 37 in tRNAs that read codons beginning with uridine, leading to the formation of N6-(dimethylallyl)adenosine (i(6)A). The protein is tRNA dimethylallyltransferase of Geobacter metallireducens (strain ATCC 53774 / DSM 7210 / GS-15).